The chain runs to 547 residues: Chaperonin GroEL (547 aa).

Residues 30–33, lysine 51, 87–91, glycine 415, 479–481, and aspartate 495 each bind ATP; these read TLGP, DGTTT, and NAA.

Belongs to the chaperonin (HSP60) family. In terms of assembly, forms a cylinder of 14 subunits composed of two heptameric rings stacked back-to-back. Interacts with the co-chaperonin GroES.

It localises to the cytoplasm. The enzyme catalyses ATP + H2O + a folded polypeptide = ADP + phosphate + an unfolded polypeptide.. Together with its co-chaperonin GroES, plays an essential role in assisting protein folding. The GroEL-GroES system forms a nano-cage that allows encapsulation of the non-native substrate proteins and provides a physical environment optimized to promote and accelerate protein folding. The polypeptide is Chaperonin GroEL (Cupriavidus necator (strain ATCC 17699 / DSM 428 / KCTC 22496 / NCIMB 10442 / H16 / Stanier 337) (Ralstonia eutropha)).